The sequence spans 526 residues: Delayed-rectifier potassium channel regulatory subunit KCNS1 (526 aa).

Residues 1-217 (MLMLLVRGTH…LTMENPGYSL (217 aa)) lie on the Cytoplasmic side of the membrane. The helical transmembrane segment at 218-239 (PSKLFSCVSISVVLASIAAMCI) threads the bilayer. The Extracellular segment spans residues 240-270 (HSLPEYQAREAAAAVAAVAAGRSPEGVRDDP). Residues 271-293 (VLRRLEYFCIAWFSFEVSSRLLL) form a helical membrane-spanning segment. Topologically, residues 294 to 304 (APSTRNFFCHP) are cytoplasmic. A helical membrane pass occupies residues 305 to 322 (LNLIDIVSVLPFYLTLLA). The Extracellular segment spans residues 323–337 (GVALGDQGGKEFGHL). A helical; Voltage-sensor membrane pass occupies residues 338-358 (GKVVQVFRLMRIFRVLKLARH). The Cytoplasmic portion of the chain corresponds to 359-373 (STGLRSLGATLKHSY). Residues 374 to 395 (REVGILLLYLAVGVSVFSGVAY) form a helical membrane-spanning segment. Over 396 to 408 (TAEKEEDVGFNTI) the chain is Extracellular. The helical intramembrane region spans 409–420 (PACWWWGTVSMT). Positions 421-426 (TVGYGD) match the Selectivity filter motif. The stretch at 421 to 428 (TVGYGDVV) is an intramembrane region. At 429–435 (PVTVAGK) the chain is on the extracellular side. A helical transmembrane segment spans residues 436-464 (LAASGCILGGILVVALPITIIFNKFSHFY). Over 465 to 526 (RRQKALEAAV…PSEPPHPQMY (62 aa)) the chain is Cytoplasmic. The tract at residues 491 to 526 (GVSEASLETSRETSQEGRSADLESQAPSEPPHPQMY) is disordered. The segment covering 499-511 (TSRETSQEGRSAD) has biased composition (basic and acidic residues).

The protein belongs to the potassium channel family. S (TC 1.A.1.2) subfamily. Kv9.1/KCNS1 sub-subfamily. In terms of assembly, heterotetramer with KCNB1. Heterotetramer with KCNB2. Does not form homomultimers.

It localises to the cell membrane. Its function is as follows. Potassium channel regulatory subunit that modulate the delayed rectifier voltage-gated potassium channel activity of KCNB1 and KCNB2 by altering their kinetics, expression levels, and shifting the half-inactivation potential to more polarized values. While it does not form functional channels on its own, it can form functional heterotetrameric channels with KCNB1 and KCNB2. Each regulatory subunit has unique regulatory properties that can lead to extensive inhibition, significant changes in kinetics, and/or substantial shifts in the voltage dependencies of the inactivation process. This Pongo abelii (Sumatran orangutan) protein is Delayed-rectifier potassium channel regulatory subunit KCNS1.